The following is a 351-amino-acid chain: Ion-translocating oxidoreductase complex subunit D (351 aa).

A run of 3 helical transmembrane segments spans residues 37–57, 88–108, and 123–143; these read YFFG…AILA, AIPP…AIVI, and PAMA…TTWL. Threonine 187 carries the post-translational modification FMN phosphoryl threonine. The next 4 membrane-spanning stretches (helical) occupy residues 214-234, 241-261, 270-290, and 300-317; these read FAGL…LFLL, WHIP…FAVF, IFNL…TDPV, and LYYG…RSWG.

This sequence belongs to the NqrB/RnfD family. In terms of assembly, the complex is composed of six subunits: RnfA, RnfB, RnfC, RnfD, RnfE and RnfG. FMN is required as a cofactor.

It is found in the cell inner membrane. Part of a membrane-bound complex that couples electron transfer with translocation of ions across the membrane. This is Ion-translocating oxidoreductase complex subunit D from Aliivibrio salmonicida (strain LFI1238) (Vibrio salmonicida (strain LFI1238)).